We begin with the raw amino-acid sequence, 217 residues long: dITP/XTP pyrophosphatase (217 aa).

7–12 (SRNKKK) is a substrate binding site. Asp72 serves as the catalytic Proton acceptor. Position 72 (Asp72) interacts with Mg(2+). Substrate-binding positions include Ser73, 163-166 (FGYD), Lys195, and 200-201 (HR).

This sequence belongs to the HAM1 NTPase family. In terms of assembly, homodimer. The cofactor is Mg(2+).

It catalyses the reaction XTP + H2O = XMP + diphosphate + H(+). The enzyme catalyses dITP + H2O = dIMP + diphosphate + H(+). It carries out the reaction ITP + H2O = IMP + diphosphate + H(+). Functionally, pyrophosphatase that catalyzes the hydrolysis of nucleoside triphosphates to their monophosphate derivatives, with a high preference for the non-canonical purine nucleotides XTP (xanthosine triphosphate), dITP (deoxyinosine triphosphate) and ITP. Seems to function as a house-cleaning enzyme that removes non-canonical purine nucleotides from the nucleotide pool, thus preventing their incorporation into DNA/RNA and avoiding chromosomal lesions. The chain is dITP/XTP pyrophosphatase from Corynebacterium jeikeium (strain K411).